The following is a 146-amino-acid chain: Hemoglobin subunit beta (146 aa).

Position 1 is an N-acetylvaline (Val1). The Globin domain occupies 2 to 146 (HLTPEEKNAV…VANALAHKYH (145 aa)). Thr12 is subject to Phosphothreonine. Ser44 is subject to Phosphoserine. Lys59 carries the N6-acetyllysine modification. His63 provides a ligand contact to heme b. Lys82 carries the N6-acetyllysine modification. His92 is a heme b binding site. Cys93 bears the S-nitrosocysteine mark. The residue at position 144 (Lys144) is an N6-acetyllysine.

Belongs to the globin family. Heterotetramer of two alpha chains and two beta chains. In terms of tissue distribution, red blood cells.

Its function is as follows. Involved in oxygen transport from the lung to the various peripheral tissues. The protein is Hemoglobin subunit beta (HBB) of Theropithecus gelada (Gelada baboon).